A 296-amino-acid polypeptide reads, in one-letter code: Protoheme IX farnesyltransferase (296 aa).

Residues 1–9 are Cytoplasmic-facing; that stretch reads MMFKQYLQV. Residues 10-28 traverse the membrane as a helical segment; the sequence is TKPGIIFGNLISVIGGFLL. Over 29–37 the chain is Periplasmic; that stretch reads ASKGSIDYP. A helical membrane pass occupies residues 38-56; that stretch reads LFIYTLVGVSLVVASGCVF. Residues 57–78 lie on the Cytoplasmic side of the membrane; the sequence is NNYIDRDIDRKMERTKNRVLVK. Residues 79–97 form a helical membrane-spanning segment; that stretch reads GLISPGVSLVYATLLGIAG. Residues 98 to 107 are Periplasmic-facing; that stretch reads FMLLWFGANP. Residues 108-126 traverse the membrane as a helical segment; that stretch reads LACWLGVMGFVVYVGVYSL. Topologically, residues 127-197 are cytoplasmic; that stretch reads YMKRHSVYGT…YQAANIPVLP (71 aa). A helical membrane pass occupies residues 198 to 216; it reads VIKGISVAKNHITLYIIAF. Residues 217–228 lie on the Periplasmic side of the membrane; it reads AVATLMLTLGGY. The helical transmembrane segment at 229 to 247 threads the bilayer; the sequence is AGYKYLVVAAAVSVWWLGM. Over 248–268 the chain is Cytoplasmic; it reads ALRGYKVEDDKVWARKLFGFS. A helical transmembrane segment spans residues 269–287; it reads IIAITALSIMMSVDFMVPN. Topologically, residues 288–296 are periplasmic; that stretch reads SQNLLTYVW.

Belongs to the UbiA prenyltransferase family. Protoheme IX farnesyltransferase subfamily.

It localises to the cell inner membrane. The catalysed reaction is heme b + (2E,6E)-farnesyl diphosphate + H2O = Fe(II)-heme o + diphosphate. It participates in porphyrin-containing compound metabolism; heme O biosynthesis; heme O from protoheme: step 1/1. In terms of biological role, converts heme B (protoheme IX) to heme O by substitution of the vinyl group on carbon 2 of heme B porphyrin ring with a hydroxyethyl farnesyl side group. This is Protoheme IX farnesyltransferase from Salmonella typhi.